We begin with the raw amino-acid sequence, 133 residues long: UPF0102 protein Fnod_1509 (133 aa).

The protein belongs to the UPF0102 family.

This is UPF0102 protein Fnod_1509 from Fervidobacterium nodosum (strain ATCC 35602 / DSM 5306 / Rt17-B1).